A 601-amino-acid chain; its full sequence is Elongation factor 4 (601 aa).

The tr-type G domain occupies 8–189 (EQIRNFGIIA…LIVRKAPPPK (182 aa)). 20–25 (DHGKST) contributes to the GTP binding site.

It belongs to the TRAFAC class translation factor GTPase superfamily. Classic translation factor GTPase family. LepA subfamily.

It localises to the cell membrane. It carries out the reaction GTP + H2O = GDP + phosphate + H(+). In terms of biological role, required for accurate and efficient protein synthesis under certain stress conditions. May act as a fidelity factor of the translation reaction, by catalyzing a one-codon backward translocation of tRNAs on improperly translocated ribosomes. Back-translocation proceeds from a post-translocation (POST) complex to a pre-translocation (PRE) complex, thus giving elongation factor G a second chance to translocate the tRNAs correctly. Binds to ribosomes in a GTP-dependent manner. This is Elongation factor 4 from Tropheryma whipplei (strain TW08/27) (Whipple's bacillus).